The primary structure comprises 899 residues: Bifunctional uridylyltransferase/uridylyl-removing enzyme (899 aa).

The segment at 1-342 (MPQMDPELFD…RAGESGPATP (342 aa)) is uridylyltransferase. The interval 343–705 (LNSRFQVRDG…TTQREFEGGT (363 aa)) is uridylyl-removing. Residues 461-583 (VDAHTLNLIK…VGDQTHLDYL (123 aa)) form the HD domain. ACT domains lie at 706–784 (QIFI…DEYP) and 816–897 (ILEL…SLQI).

The protein belongs to the GlnD family. Mg(2+) serves as cofactor.

It catalyses the reaction [protein-PII]-L-tyrosine + UTP = [protein-PII]-uridylyl-L-tyrosine + diphosphate. The catalysed reaction is [protein-PII]-uridylyl-L-tyrosine + H2O = [protein-PII]-L-tyrosine + UMP + H(+). With respect to regulation, uridylyltransferase (UTase) activity is inhibited by glutamine, while glutamine activates uridylyl-removing (UR) activity. In terms of biological role, modifies, by uridylylation and deuridylylation, the PII regulatory proteins (GlnB and homologs), in response to the nitrogen status of the cell that GlnD senses through the glutamine level. Under low glutamine levels, catalyzes the conversion of the PII proteins and UTP to PII-UMP and PPi, while under higher glutamine levels, GlnD hydrolyzes PII-UMP to PII and UMP (deuridylylation). Thus, controls uridylylation state and activity of the PII proteins, and plays an important role in the regulation of nitrogen assimilation and metabolism. This Ectopseudomonas mendocina (strain ymp) (Pseudomonas mendocina) protein is Bifunctional uridylyltransferase/uridylyl-removing enzyme.